The chain runs to 248 residues: Ubiquinone biosynthesis O-methyltransferase (248 aa).

Residues Arg-40, Gly-71, Asp-92, and Met-135 each coordinate S-adenosyl-L-methionine.

Belongs to the methyltransferase superfamily. UbiG/COQ3 family.

It catalyses the reaction a 3-demethylubiquinol + S-adenosyl-L-methionine = a ubiquinol + S-adenosyl-L-homocysteine + H(+). It carries out the reaction a 3-(all-trans-polyprenyl)benzene-1,2-diol + S-adenosyl-L-methionine = a 2-methoxy-6-(all-trans-polyprenyl)phenol + S-adenosyl-L-homocysteine + H(+). It functions in the pathway cofactor biosynthesis; ubiquinone biosynthesis. O-methyltransferase that catalyzes the 2 O-methylation steps in the ubiquinone biosynthetic pathway. This Ruegeria pomeroyi (strain ATCC 700808 / DSM 15171 / DSS-3) (Silicibacter pomeroyi) protein is Ubiquinone biosynthesis O-methyltransferase.